The primary structure comprises 144 residues: Large ribosomal subunit protein uL13 (144 aa).

Belongs to the universal ribosomal protein uL13 family. Part of the 50S ribosomal subunit.

Its function is as follows. This protein is one of the early assembly proteins of the 50S ribosomal subunit, although it is not seen to bind rRNA by itself. It is important during the early stages of 50S assembly. The polypeptide is Large ribosomal subunit protein uL13 (Mesomycoplasma hyopneumoniae (strain 232) (Mycoplasma hyopneumoniae)).